The chain runs to 212 residues: Thymidylate kinase (212 aa).

10–17 (GPDGAGKT) lines the ATP pocket.

The protein belongs to the thymidylate kinase family.

It carries out the reaction dTMP + ATP = dTDP + ADP. Its function is as follows. Phosphorylation of dTMP to form dTDP in both de novo and salvage pathways of dTTP synthesis. This chain is Thymidylate kinase, found in Exiguobacterium sibiricum (strain DSM 17290 / CCUG 55495 / CIP 109462 / JCM 13490 / 255-15).